The primary structure comprises 258 residues: Acyl-[acyl-carrier-protein]--UDP-N-acetylglucosamine O-acyltransferase (258 aa).

This sequence belongs to the transferase hexapeptide repeat family. LpxA subfamily. As to quaternary structure, homotrimer.

It is found in the cytoplasm. The enzyme catalyses a (3R)-hydroxyacyl-[ACP] + UDP-N-acetyl-alpha-D-glucosamine = a UDP-3-O-[(3R)-3-hydroxyacyl]-N-acetyl-alpha-D-glucosamine + holo-[ACP]. It functions in the pathway glycolipid biosynthesis; lipid IV(A) biosynthesis; lipid IV(A) from (3R)-3-hydroxytetradecanoyl-[acyl-carrier-protein] and UDP-N-acetyl-alpha-D-glucosamine: step 1/6. In terms of biological role, involved in the biosynthesis of lipid A, a phosphorylated glycolipid that anchors the lipopolysaccharide to the outer membrane of the cell. This is Acyl-[acyl-carrier-protein]--UDP-N-acetylglucosamine O-acyltransferase from Pseudomonas savastanoi pv. phaseolicola (strain 1448A / Race 6) (Pseudomonas syringae pv. phaseolicola (strain 1448A / Race 6)).